A 493-amino-acid polypeptide reads, in one-letter code: Glutamate--tRNA ligase (493 aa).

Residues 10–20 (PSPTGDPHVGT) carry the 'HIGH' region motif. The 'KMSKS' region signature appears at 251–255 (KLSKR). Residue Lys-254 coordinates ATP.

It belongs to the class-I aminoacyl-tRNA synthetase family. Glutamate--tRNA ligase type 1 subfamily. In terms of assembly, monomer.

Its subcellular location is the cytoplasm. The catalysed reaction is tRNA(Glu) + L-glutamate + ATP = L-glutamyl-tRNA(Glu) + AMP + diphosphate. In terms of biological role, catalyzes the attachment of glutamate to tRNA(Glu) in a two-step reaction: glutamate is first activated by ATP to form Glu-AMP and then transferred to the acceptor end of tRNA(Glu). This Pseudomonas savastanoi pv. phaseolicola (strain 1448A / Race 6) (Pseudomonas syringae pv. phaseolicola (strain 1448A / Race 6)) protein is Glutamate--tRNA ligase.